The primary structure comprises 156 residues: Ribosomal RNA large subunit methyltransferase H (156 aa).

S-adenosyl-L-methionine is bound by residues L72, G104, and 123 to 128 (LSKMTL).

Belongs to the RNA methyltransferase RlmH family. Homodimer.

It is found in the cytoplasm. It carries out the reaction pseudouridine(1915) in 23S rRNA + S-adenosyl-L-methionine = N(3)-methylpseudouridine(1915) in 23S rRNA + S-adenosyl-L-homocysteine + H(+). Its function is as follows. Specifically methylates the pseudouridine at position 1915 (m3Psi1915) in 23S rRNA. The sequence is that of Ribosomal RNA large subunit methyltransferase H from Maridesulfovibrio salexigens (strain ATCC 14822 / DSM 2638 / NCIMB 8403 / VKM B-1763) (Desulfovibrio salexigens).